Consider the following 334-residue polypeptide: Holliday junction branch migration complex subunit RuvB (334 aa).

Residues Met1–Tyr182 are large ATPase domain (RuvB-L). ATP-binding positions include Leu21, Arg22, Gly63, Lys66, Thr67, Thr68, Glu129–Phe131, Arg172, Tyr182, and Arg219. A Mg(2+)-binding site is contributed by Thr67. The segment at Asn183 to Gln253 is small ATPAse domain (RuvB-S). Residues Gln256–Gly334 are head domain (RuvB-H). 3 residues coordinate DNA: Arg292, Arg311, and Arg316.

This sequence belongs to the RuvB family. Homohexamer. Forms an RuvA(8)-RuvB(12)-Holliday junction (HJ) complex. HJ DNA is sandwiched between 2 RuvA tetramers; dsDNA enters through RuvA and exits via RuvB. An RuvB hexamer assembles on each DNA strand where it exits the tetramer. Each RuvB hexamer is contacted by two RuvA subunits (via domain III) on 2 adjacent RuvB subunits; this complex drives branch migration. In the full resolvosome a probable DNA-RuvA(4)-RuvB(12)-RuvC(2) complex forms which resolves the HJ.

The protein resides in the cytoplasm. The catalysed reaction is ATP + H2O = ADP + phosphate + H(+). Its function is as follows. The RuvA-RuvB-RuvC complex processes Holliday junction (HJ) DNA during genetic recombination and DNA repair, while the RuvA-RuvB complex plays an important role in the rescue of blocked DNA replication forks via replication fork reversal (RFR). RuvA specifically binds to HJ cruciform DNA, conferring on it an open structure. The RuvB hexamer acts as an ATP-dependent pump, pulling dsDNA into and through the RuvAB complex. RuvB forms 2 homohexamers on either side of HJ DNA bound by 1 or 2 RuvA tetramers; 4 subunits per hexamer contact DNA at a time. Coordinated motions by a converter formed by DNA-disengaged RuvB subunits stimulates ATP hydrolysis and nucleotide exchange. Immobilization of the converter enables RuvB to convert the ATP-contained energy into a lever motion, pulling 2 nucleotides of DNA out of the RuvA tetramer per ATP hydrolyzed, thus driving DNA branch migration. The RuvB motors rotate together with the DNA substrate, which together with the progressing nucleotide cycle form the mechanistic basis for DNA recombination by continuous HJ branch migration. Branch migration allows RuvC to scan DNA until it finds its consensus sequence, where it cleaves and resolves cruciform DNA. The sequence is that of Holliday junction branch migration complex subunit RuvB from Staphylococcus aureus (strain N315).